We begin with the raw amino-acid sequence, 489 residues long: Mitochondrial-processing peptidase subunit beta (489 aa).

The transit peptide at 1-45 (MAAAALSRTLLPEARRRLWGFTRRLPLRRAAAQPLYFGGDRLRST) directs the protein to the mitochondrion. Residue histidine 101 participates in Zn(2+) binding. Glutamate 104 acts as the Proton acceptor in catalysis. Histidine 105 and glutamate 181 together coordinate Zn(2+).

The protein belongs to the peptidase M16 family. Heterodimer of PMPCA (alpha) and PMPCB (beta) subunits, forming the mitochondrial processing protease (MPP) in which PMPCA is involved in substrate recognition and binding and PMPCB is the catalytic subunit. The cofactor is Zn(2+).

Its subcellular location is the mitochondrion matrix. The enzyme catalyses Release of N-terminal transit peptides from precursor proteins imported into the mitochondrion, typically with Arg in position P2.. With respect to regulation, binding to PMPCA is required for catalytic activity. Catalytic subunit of the essential mitochondrial processing protease (MPP), which cleaves the mitochondrial sequence off newly imported precursors proteins. Preferentially, cleaves after an arginine at position P2. Required for PINK1 turnover by coupling PINK1 mitochondrial import and cleavage, which results in subsequent PINK1 proteolysis. This is Mitochondrial-processing peptidase subunit beta (Pmpcb) from Mus musculus (Mouse).